We begin with the raw amino-acid sequence, 577 residues long: Vacuolar membrane amino acid uptake transporter fnx2 (577 aa).

A compositionally biased stretch (polar residues) spans 1 to 14 (MSNPRTKSPNTNRG). Positions 1–80 (MSNPRTKSPN…SPHRQDAATT (80 aa)) are disordered. Residues 22–39 (SALLNDSLSSLNGNSSYD) are compositionally biased toward low complexity. The segment covering 40 to 62 (SIKDSSKNNKDVAEVNEYPRRPE) has biased composition (basic and acidic residues). The next 14 membrane-spanning stretches (helical) occupy residues 91-111 (VLPA…IVAS), 123-145 (FSQV…PLFG), 157-177 (LLAA…SRSL), 186-206 (IAGI…SDIV), 217-237 (IINV…GYFA), 244-264 (IGFL…YFTL), 286-306 (LILL…GGNV), 317-337 (LLIA…FVAF), 356-376 (LCNF…PLFF), 391-411 (LIPM…VISL), 418-438 (ITVG…RYGY), 448-468 (YPFS…VAII), 490-510 (GCVL…GIKL), and 547-567 (LLGS…CAFV).

It belongs to the major facilitator superfamily.

Its subcellular location is the vacuole. The protein resides in the membrane. In terms of biological role, MFS-type transporter involved in vacuolar amino acid uptake. The sequence is that of Vacuolar membrane amino acid uptake transporter fnx2 (fnx2) from Schizosaccharomyces pombe (strain 972 / ATCC 24843) (Fission yeast).